The primary structure comprises 181 residues: Probable pyruvoyl-dependent arginine decarboxylase (181 aa).

Ser-43 is subject to Pyruvic acid (Ser).

Belongs to the PdaD family. Pyruvate is required as a cofactor.

The catalysed reaction is L-arginine + H(+) = agmatine + CO2. The protein is Probable pyruvoyl-dependent arginine decarboxylase of Chlorobium limicola (strain DSM 245 / NBRC 103803 / 6330).